The sequence spans 186 residues: Elongation factor P (186 aa).

The protein belongs to the elongation factor P family.

It is found in the cytoplasm. It functions in the pathway protein biosynthesis; polypeptide chain elongation. Its function is as follows. Involved in peptide bond synthesis. Stimulates efficient translation and peptide-bond synthesis on native or reconstituted 70S ribosomes in vitro. Probably functions indirectly by altering the affinity of the ribosome for aminoacyl-tRNA, thus increasing their reactivity as acceptors for peptidyl transferase. In Streptococcus thermophilus (strain CNRZ 1066), this protein is Elongation factor P.